The following is a 234-amino-acid chain: BTB/POZ domain-containing protein KCTD5 (234 aa).

Position 2 is an N-acetylalanine (A2). One can recognise a BTB domain in the interval 44–146 (KWVRLNVGGT…LVKDKIRERD (103 aa)). The interval 211 to 234 (NSPHGPASEPSEKAKILQERGSRM) is disordered. Basic and acidic residues predominate over residues 220 to 234 (PSEKAKILQERGSRM).

In terms of assembly, homopentamer. Interacts (via C-terminus) with GRASP55/GORASP2. Interacts with CUL3 and with ubiquitinated proteins. Interacts with CRY1.

It is found in the cytoplasm. The protein localises to the cytosol. It localises to the nucleus. Functionally, its interaction with CUL3 suggests that it may act as a substrate adapter in some E3 ligase complex. Does not affect the function of Kv channel Kv2.1/KCNB1, Kv1.2/KCNA2, Kv4.2/KCND2 and Kv3.4/KCNC4. The chain is BTB/POZ domain-containing protein KCTD5 (KCTD5) from Bos taurus (Bovine).